A 203-amino-acid chain; its full sequence is Cutinase pbc1 (203 aa).

A signal peptide spans 1 to 18 (MKVTALGNTLTGFGQALA). Cys32 and Cys107 form a disulfide bridge. The active-site Nucleophile is Ser118. A disulfide bridge connects residues Cys166 and Cys173. The active site involves His170. His183 serves as the catalytic Proton donor/acceptor.

It belongs to the cutinase family. The 2 disulfide bonds play a critical role in holding the catalytic residues in juxta-position; reduction of the disulfide bridges results in the complete inactivation of the enzyme.

Its subcellular location is the secreted. It carries out the reaction cutin + H2O = cutin monomers.. In terms of biological role, catalyzes the hydrolysis of complex carboxylic polyesters found in the cell wall of plants. Degrades cutin, a macromolecule that forms the structure of the plant cuticle. Allows pathogenic fungi to penetrate through the cuticular barrier into the host plant during the initial stage of fungal infection. This is Cutinase pbc1 from Pyrenopeziza brassicae.